A 341-amino-acid polypeptide reads, in one-letter code: Glyceraldehyde-3-phosphate dehydrogenase 4 (341 aa).

NAD(+) is bound by residues 13–14, D35, and K85; that span reads RI. D-glyceraldehyde 3-phosphate contacts are provided by residues 157–159, T188, 217–218, and R240; these read SCT and TG. The active-site Nucleophile is the C158. N322 contributes to the NAD(+) binding site.

The protein belongs to the glyceraldehyde-3-phosphate dehydrogenase family. As to quaternary structure, homotetramer.

It is found in the cytoplasm. The enzyme catalyses D-glyceraldehyde 3-phosphate + phosphate + NAD(+) = (2R)-3-phospho-glyceroyl phosphate + NADH + H(+). It functions in the pathway carbohydrate degradation; glycolysis; pyruvate from D-glyceraldehyde 3-phosphate: step 1/5. This is Glyceraldehyde-3-phosphate dehydrogenase 4 (gpd-4) from Caenorhabditis elegans.